The chain runs to 860 residues: Leucine--tRNA ligase (860 aa).

Residues 42–52 (PYPSGRLHMGH) carry the 'HIGH' region motif. The 'KMSKS' region signature appears at 619-623 (KMSKS). K622 provides a ligand contact to ATP.

Belongs to the class-I aminoacyl-tRNA synthetase family.

It localises to the cytoplasm. It carries out the reaction tRNA(Leu) + L-leucine + ATP = L-leucyl-tRNA(Leu) + AMP + diphosphate. This Escherichia coli O127:H6 (strain E2348/69 / EPEC) protein is Leucine--tRNA ligase.